Reading from the N-terminus, the 241-residue chain is MGRAYQNRKESMAKTAAAKTKVYSKYGREIYMAAKAGGIDPQANLSLRGLIERAKKDQVPTHVIEKAIDKAKGGAGEDYAPARYEGYGPGNCMVIVDCLTDNPNRTFGDVRLAFTKTKCKIGTPGAVAHMFDHCAIFAFAGQDEEAVLEALMEADVDVTDIESEDGKITVFTPNTEYAKAKQALEAAFEGIEFDVDEIQFLPKTTTVVEGDDIPMFEKFLDMLNDLDDVQNVFHNAELPQE.

This sequence belongs to the TACO1 family.

The protein localises to the cytoplasm. This Marinobacter nauticus (strain ATCC 700491 / DSM 11845 / VT8) (Marinobacter aquaeolei) protein is Probable transcriptional regulatory protein Maqu_2154.